We begin with the raw amino-acid sequence, 361 residues long: Putative agmatine deiminase (361 aa).

Cys-354 (amidino-cysteine intermediate) is an active-site residue.

The protein belongs to the agmatine deiminase family.

It carries out the reaction agmatine + H2O = N-carbamoylputrescine + NH4(+). The sequence is that of Putative agmatine deiminase from Streptococcus pneumoniae (strain 70585).